A 338-amino-acid polypeptide reads, in one-letter code: Formimidoylglutamase (338 aa).

Mn(2+) contacts are provided by H137, D166, H168, D170, C259, and D261.

It belongs to the arginase family. Mn(2+) is required as a cofactor.

The catalysed reaction is N-formimidoyl-L-glutamate + H2O = formamide + L-glutamate. It participates in amino-acid degradation; L-histidine degradation into L-glutamate; L-glutamate from N-formimidoyl-L-glutamate (hydrolase route): step 1/1. Its function is as follows. Catalyzes the conversion of N-formimidoyl-L-glutamate to L-glutamate and formamide. The chain is Formimidoylglutamase from Clostridium tetani (strain Massachusetts / E88).